A 554-amino-acid chain; its full sequence is Arginine--tRNA ligase (554 aa).

The 'HIGH' region motif lies at 129-139; the sequence is ANPTGPLHIGH.

Belongs to the class-I aminoacyl-tRNA synthetase family. As to quaternary structure, monomer.

It localises to the cytoplasm. It catalyses the reaction tRNA(Arg) + L-arginine + ATP = L-arginyl-tRNA(Arg) + AMP + diphosphate. The polypeptide is Arginine--tRNA ligase (Citrifermentans bemidjiense (strain ATCC BAA-1014 / DSM 16622 / JCM 12645 / Bem) (Geobacter bemidjiensis)).